Here is a 464-residue protein sequence, read N- to C-terminus: tRNA modification GTPase MnmE (464 aa).

3 residues coordinate (6S)-5-formyl-5,6,7,8-tetrahydrofolate: R23, E84, and R123. The 171-residue stretch at 216 to 386 folds into the TrmE-type G domain; the sequence is GARATLVGRP…LGATVARLLL (171 aa). N226 contacts K(+). GTP is bound by residues 226-231, 245-251, and 270-273; these read NAGKSS, TPIPGTT, and DTAG. Residue S230 participates in Mg(2+) binding. Residues T245, I247, and T250 each coordinate K(+). T251 contributes to the Mg(2+) binding site. Residue K464 participates in (6S)-5-formyl-5,6,7,8-tetrahydrofolate binding.

It belongs to the TRAFAC class TrmE-Era-EngA-EngB-Septin-like GTPase superfamily. TrmE GTPase family. In terms of assembly, homodimer. Heterotetramer of two MnmE and two MnmG subunits. K(+) serves as cofactor.

The protein localises to the cytoplasm. Its function is as follows. Exhibits a very high intrinsic GTPase hydrolysis rate. Involved in the addition of a carboxymethylaminomethyl (cmnm) group at the wobble position (U34) of certain tRNAs, forming tRNA-cmnm(5)s(2)U34. The protein is tRNA modification GTPase MnmE of Roseiflexus castenholzii (strain DSM 13941 / HLO8).